Here is a 100-residue protein sequence, read N- to C-terminus: uncharacterized protein (100 aa).

The signal sequence occupies residues 1-17 (MTMKYFCSVMIAIALVG). C18 carries N-palmitoyl cysteine lipidation. Residue C18 is the site of S-diacylglycerol cysteine attachment.

It is found in the cell membrane. This is an uncharacterized protein from Salmonella paratyphi A (strain ATCC 9150 / SARB42).